An 82-amino-acid chain; its full sequence is Small ribosomal subunit protein bS16 (82 aa).

The protein belongs to the bacterial ribosomal protein bS16 family.

This Haemophilus influenzae (strain 86-028NP) protein is Small ribosomal subunit protein bS16.